The sequence spans 185 residues: Large ribosomal subunit protein uL5 (185 aa).

It belongs to the universal ribosomal protein uL5 family. In terms of assembly, part of the 50S ribosomal subunit; part of the 5S rRNA/L5/L18/L25 subcomplex. Contacts the 5S rRNA and the P site tRNA. Forms a bridge to the 30S subunit in the 70S ribosome.

Its function is as follows. This is one of the proteins that bind and probably mediate the attachment of the 5S RNA into the large ribosomal subunit, where it forms part of the central protuberance. In the 70S ribosome it contacts protein S13 of the 30S subunit (bridge B1b), connecting the 2 subunits; this bridge is implicated in subunit movement. Contacts the P site tRNA; the 5S rRNA and some of its associated proteins might help stabilize positioning of ribosome-bound tRNAs. The polypeptide is Large ribosomal subunit protein uL5 (Bradyrhizobium sp. (strain BTAi1 / ATCC BAA-1182)).